The primary structure comprises 322 residues: MTSAGPGSDPGTGRAAVVRRLREGMAASVLSFPLTSFHEDGSFDADGYRAYVAERLAAGPGALFPACGTGEFFSLDEDEYRQAVAIAVEETAGSVPVVAGTGYGWAQALRFARIAEDAGADALLVMPHYLTAAPQDGLVAQMERIAAGTRLPLIAYQRGQVAYTAESVRRLTRVPGVIGLKDGHSDLDRLQRAVLAAPDDFLFFNGAATAEVQARAYAAVGVPAYSSAVHAFAPEIANAFLAALRGGDTGTVDKLLRDFYVPLVELRDRVPGYAVSLVKAAARLRGCPVGPVRAPLTDPSPADLAALTTLLTTGLDLVGAAL.

The protein belongs to the DapA family.

It catalyses the reaction 5-dehydro-4-deoxy-D-glucarate + H(+) = 2,5-dioxopentanoate + CO2 + H2O. It functions in the pathway carbohydrate acid metabolism; D-glucarate degradation; 2,5-dioxopentanoate from D-glucarate: step 2/2. This is Probable 5-dehydro-4-deoxyglucarate dehydratase 2 from Streptomyces coelicolor (strain ATCC BAA-471 / A3(2) / M145).